A 1052-amino-acid polypeptide reads, in one-letter code: Mitotic checkpoint serine/threonine-protein kinase BUB1 beta (1052 aa).

The BUB1 N-terminal domain maps to F56–S219. The short motif at G105–D112 is the Nuclear localization signal element. A necessary for interaction with KNL1 region spans residues A146–P179. Disordered stretches follow at residues E206 to P256 and A272 to P327. The short motif at R217–S225 is the D-box element. K243 is subject to N6-acetyllysine; by PCAF. S360 carries the phosphoserine modification. Positions T361–G381 are disordered. S428 is modified (phosphoserine). The interval S496–S552 is disordered. Polar residues predominate over residues L508–P520. 2 positions are modified to phosphoserine: S535 and S659. A Phosphoserine; by PLK1 modification is found at S665. Phosphoserine is present on S686. The 285-residue stretch at V756–Q1040 folds into the Protein kinase domain. L762 to F770 is a binding site for ATP. At T781 the chain carries Phosphothreonine; by PLK1. An ATP-binding site is contributed by K784. D871 (proton acceptor) is an active-site residue. T998 carries the phosphothreonine; by PLK1 modification. S1033 and S1050 each carry phosphoserine.

It belongs to the protein kinase superfamily. Ser/Thr protein kinase family. BUB1 subfamily. In terms of assembly, interacts with CENPE. Interacts with PLK1. Part of a complex containing BUB3, CDC20 and BUB1B. Interacts with anaphase-promoting complex/cyclosome (APC/C). Interacts with KNL1. Interacts with KAT2B. Interacts with RIPK3. Interacts with the closed conformation form of MAD2L1. Interacts with CDC20. In terms of processing, proteolytically cleaved by caspase-3 in a cell cycle specific manner. The cleavage might be involved in the durability of the cell cycle delay. Acetylation at Lys-243 regulates its degradation and timing in anaphase entry. Post-translationally, ubiquitinated. Degraded by the proteasome. Ubiquitinated by UBR5, promoting disassembly of the mitotic checkpoint complex from the APC/C complex. In terms of processing, sumoylated with SUMO2 and SUMO3. The sumoylation mediates the association with CENPE at the kinetochore. Autophosphorylated in vitro. Intramolecular autophosphorylation stimulated by CENPE. Phosphorylated during mitosis and hyperphosphorylated in mitotically arrested cells. Phosphorylation at Ser-659 and Ser-1033 occurs at kinetochores upon mitotic entry with dephosphorylation at the onset of anaphase. Post-translationally, proteolytically cleaved by caspase-3 in a cell cycle specific manner. The cleavage might be involved in the durability of the cell cycle delay. Caspase-3 cleavage is associated with abrogation of the mitotic checkpoint. The major site of cleavage is at Asp-603. As to expression, highly expressed in thymus followed by spleen.

Its subcellular location is the cytoplasm. It localises to the nucleus. The protein resides in the chromosome. The protein localises to the centromere. It is found in the kinetochore. It carries out the reaction L-seryl-[protein] + ATP = O-phospho-L-seryl-[protein] + ADP + H(+). The enzyme catalyses L-threonyl-[protein] + ATP = O-phospho-L-threonyl-[protein] + ADP + H(+). Its activity is regulated as follows. Kinase activity stimulated by CENPE. Its function is as follows. Essential component of the mitotic checkpoint. Required for normal mitosis progression and tumor suppression. The mitotic checkpoint delays anaphase until all chromosomes are properly attached to the mitotic spindle. One of its checkpoint functions is to inhibit the activity of the anaphase-promoting complex/cyclosome (APC/C) by blocking the binding of CDC20 to APC/C, independently of its kinase activity. The other is to monitor kinetochore activities that depend on the kinetochore motor CENPE. Required for kinetochore localization of CENPE. Negatively regulates PLK1 activity in interphase cells and suppresses centrosome amplification. Also implicated in triggering apoptosis in polyploid cells that exit aberrantly from mitotic arrest. Essential for tumor suppression. May play a role in regulating aging and fertility. In Mus musculus (Mouse), this protein is Mitotic checkpoint serine/threonine-protein kinase BUB1 beta (Bub1b).